The primary structure comprises 292 residues: 5,10-methylenetetrahydrofolate reductase (292 aa).

The Proton donor/acceptor role is filled by glutamate 28. Threonine 59 is an NADH binding site. Tyrosine 60, alanine 62, histidine 88, arginine 118, glycine 119, aspartate 120, alanine 132, tyrosine 152, histidine 156, aspartate 165, asparagine 168, lysine 171, and lysine 172 together coordinate FAD. Residue aspartate 120 participates in (6S)-5-methyl-5,6,7,8-tetrahydrofolate binding. An NADH-binding site is contributed by glutamine 183. Position 183 (glutamine 183) interacts with (6S)-5-methyl-5,6,7,8-tetrahydrofolate.

This sequence belongs to the methylenetetrahydrofolate reductase family. The cofactor is FAD.

It catalyses the reaction (6S)-5-methyl-5,6,7,8-tetrahydrofolate + NAD(+) = (6R)-5,10-methylene-5,6,7,8-tetrahydrofolate + NADH + H(+). It functions in the pathway one-carbon metabolism; tetrahydrofolate interconversion. It participates in amino-acid biosynthesis; L-methionine biosynthesis via de novo pathway. Its function is as follows. Catalyzes the NADH-dependent reduction of 5,10-methylenetetrahydrofolate to 5-methyltetrahydrofolate. Is required to provide the methyl group necessary for methionine synthetase to convert homocysteine to methionine; the methyl group is given by 5-methyltetrahydrofolate. In Buchnera aphidicola subsp. Acyrthosiphon pisum (strain APS) (Acyrthosiphon pisum symbiotic bacterium), this protein is 5,10-methylenetetrahydrofolate reductase (metF).